We begin with the raw amino-acid sequence, 448 residues long: N-succinylarginine dihydrolase (448 aa).

Substrate-binding positions include 19–28 (GGLSYGNVAS), Asn110, and 137–138 (HR). Glu174 is an active-site residue. Arg214 provides a ligand contact to substrate. Residue His250 is part of the active site. Positions 252 and 365 each coordinate substrate. Cys371 acts as the Nucleophile in catalysis.

This sequence belongs to the succinylarginine dihydrolase family. In terms of assembly, homodimer.

It carries out the reaction N(2)-succinyl-L-arginine + 2 H2O + 2 H(+) = N(2)-succinyl-L-ornithine + 2 NH4(+) + CO2. Its pathway is amino-acid degradation; L-arginine degradation via AST pathway; L-glutamate and succinate from L-arginine: step 2/5. Catalyzes the hydrolysis of N(2)-succinylarginine into N(2)-succinylornithine, ammonia and CO(2). This chain is N-succinylarginine dihydrolase, found in Pseudomonas aeruginosa (strain UCBPP-PA14).